We begin with the raw amino-acid sequence, 802 residues long: MQVIITSSHRFFCHHLHQLKSPTSLSAQKAEFKKHGPRNWLFQTEGSLLYKPVRLNCATSDASYLGNVNEYLESDHSKNSEEKDIQVSRTIQMKGLTEEIKHMLNSMEDGRLNVLAYDTAWVSFIPNTTNNGNDQRPMFPSCLQWIIDNQLSDGSWGEEIVFCIYDRLLNTLVCVIALTLWNTCLHKRNKGVMFIKENLSKLETGEVENMTSGFELVFPTLLEKAQQLDIDIPYDAPVLKDIYARREVKLTRIPKDVIHTIPTTVLFSLEGLRDDLDWQRLLKLQMPDGSFLISPASTAFAFMETNDEKCLAYLQNVVEKSNGGARQYPFDLVTRLWAIDRLQRLGISYYFAEEFKELLNHVFRYWDEENGIFSGRNSNVSDVDDTCMAIRLLRLHGYDVSPDALNNFKDGDQFVCFRGEVDGSPTHMFNLYRCSQVLFPGEKILEEAKNFTYNFLQQCLANNRCLDKWVIAKDIPGEIWYALEFPWYASLPRVEARYYIEQYGGADDIWIGKTLYRMPDVNNNVYLQAAKLDYNRCQSQHRFEWLIMQEWFEKCNFQQFGISKKYLLVSYFLAAASIFEVEKSRERLAWAKSRIICKMITSYYNDEATTWTTRNSLLMEFKVSHDPTRKNGNETKEILVLKNLRQFLRQLSEETFEDLGKDIHHQLQNAWETWLVFLREEKNACQEETELLVRTINLSGGYMTHDEILFDADYENLSNLTNKVCGKLNELQNDKVTGGSKNTNIELDMQALVKLVFGNTSSNINQDIKQTFFAVVKTFYYSAHVSEEIMNFHISKVLFQQV.

The transit peptide at 1 to 24 directs the protein to the chloroplast; sequence MQVIITSSHRFFCHHLHQLKSPTS. Lys-249 serves as a coordination point for substrate. Residues Asp-382 and Asp-384 each contribute to the Mg(2+) site. Residues 382-385 carry the DXDD motif motif; sequence DVDD. Substrate is bound at residue Lys-468.

This sequence belongs to the terpene synthase family. It depends on Mg(2+) as a cofactor. As to expression, expressed specifically in the secretory cells of the glandular trichomes.

It localises to the plastid. The protein resides in the chloroplast. It catalyses the reaction (2E,6E,10E)-geranylgeranyl diphosphate + H2O = 8-hydroxycopalyl diphosphate. It functions in the pathway secondary metabolite biosynthesis; terpenoid biosynthesis. Class-II terpene synthase that synthesizes 8-hydroxy-copalyl diphosphate. Involved in the biosynthesis of cis-abienol, a labdane diterpene that can be used as synthesis precursor of ambergris substitution fragance products. This chain is Copal-8-ol diphosphate hydratase, chloroplastic, found in Nicotiana tabacum (Common tobacco).